The following is a 477-amino-acid chain: Tripartite motif-containing protein 72 (477 aa).

L14, P17, P29, C31, T34, Q37, T53, P56, G86, L89, V97, E100, L105, G108, G114, and K117 together coordinate Zn(2+). Residues 16–59 (CPLCLELFRAPVTPECGHTFCQGCLTGAPKNQDQNGSTPCPTCQ) form an RING-type zinc finger. The segment at 83–124 (VPKGHCLEHLDPLSVYCEQDKELICGVCASLGKHKGHNIITA) adopts a B box-type zinc-finger fold. Residues 135-232 (LPQQQVILQE…QMDGVLKDVE (98 aa)) adopt a coiled-coil conformation. Residues 272 to 476 (DEFKFQVWRK…LKIFYPPAEQ (205 aa)) enclose the B30.2/SPRY domain.

Belongs to the TRIM/RBCC family. Homodimer. Homooligomer; disulfide-linked. Oligomerizes on the phospholipid membrane. Post-translationally, disulfide bond formation at Cys-244 occurs in case of membrane damage that cause the entry of the oxidized milieu of the extracellular space, resulting in homooligomerization.

The protein resides in the cell membrane. Its subcellular location is the sarcolemma. The protein localises to the cytoplasmic vesicle membrane. It catalyses the reaction S-ubiquitinyl-[E2 ubiquitin-conjugating enzyme]-L-cysteine + [acceptor protein]-L-lysine = [E2 ubiquitin-conjugating enzyme]-L-cysteine + N(6)-ubiquitinyl-[acceptor protein]-L-lysine.. The protein operates within protein modification; protein ubiquitination. With respect to regulation, specifically binds phosphatidylserine. The binding to phospholipids enhances ubiquitination activity. Muscle-specific E3 ubiquitin-protein ligase that plays a central role in cell membrane repair by nucleating the assembly of the repair machinery at injury sites. Acts as a sensor of oxidation: upon membrane damage, entry of extracellular oxidative environment results in disulfide bond formation and homooligomerization at the injury site. This oligomerization acts as a nucleation site for recruitment of TRIM72-containing vesicles to the injury site, leading to membrane patch formation. Probably acts upstream of the Ca(2+)-dependent membrane resealing process. Required for transport of DYSF to sites of cell injury during repair patch formation. Regulates membrane budding and exocytosis. May be involved in the regulation of the mobility of KCNB1-containing endocytic vesicles. The polypeptide is Tripartite motif-containing protein 72 (trim72) (Xenopus tropicalis (Western clawed frog)).